Consider the following 321-residue polypeptide: Lipoyl synthase (321 aa).

Residues C68, C73, C79, C94, C98, C101, and S308 each coordinate [4Fe-4S] cluster. The 218-residue stretch at 80–297 (FNHGTATFMI…KELAESIGFT (218 aa)) folds into the Radical SAM core domain.

This sequence belongs to the radical SAM superfamily. Lipoyl synthase family. [4Fe-4S] cluster is required as a cofactor.

It localises to the cytoplasm. It carries out the reaction [[Fe-S] cluster scaffold protein carrying a second [4Fe-4S](2+) cluster] + N(6)-octanoyl-L-lysyl-[protein] + 2 oxidized [2Fe-2S]-[ferredoxin] + 2 S-adenosyl-L-methionine + 4 H(+) = [[Fe-S] cluster scaffold protein] + N(6)-[(R)-dihydrolipoyl]-L-lysyl-[protein] + 4 Fe(3+) + 2 hydrogen sulfide + 2 5'-deoxyadenosine + 2 L-methionine + 2 reduced [2Fe-2S]-[ferredoxin]. It functions in the pathway protein modification; protein lipoylation via endogenous pathway; protein N(6)-(lipoyl)lysine from octanoyl-[acyl-carrier-protein]: step 2/2. Its function is as follows. Catalyzes the radical-mediated insertion of two sulfur atoms into the C-6 and C-8 positions of the octanoyl moiety bound to the lipoyl domains of lipoate-dependent enzymes, thereby converting the octanoylated domains into lipoylated derivatives. In Shewanella halifaxensis (strain HAW-EB4), this protein is Lipoyl synthase.